The chain runs to 374 residues: Probable quinol oxidase subunit 2 (374 aa).

The signal sequence occupies residues 1 to 19 (MSKFKSLLLLFGTLILLSG). A lipid anchor (N-palmitoyl cysteine) is attached at cysteine 20. Residue cysteine 20 is the site of S-diacylglycerol cysteine attachment. 2 consecutive transmembrane segments (helical) span residues 43 to 63 (SIIFMLVIVAVVLSMFAIFIF) and 82 to 102 (IETIWFVVPILIVIALAIPTV). Residues 317-374 (ERHGMKPMILGNNEKYDNEFKKEEDHNSKEMEKISKGAKDENASKLHKKEHDDHGGGH) form a disordered region. Positions 330 to 374 (EKYDNEFKKEEDHNSKEMEKISKGAKDENASKLHKKEHDDHGGGH) are enriched in basic and acidic residues.

The protein belongs to the cytochrome c oxidase subunit 2 family.

Its subcellular location is the cell membrane. The enzyme catalyses 2 a quinol + O2 = 2 a quinone + 2 H2O. In terms of biological role, catalyzes quinol oxidation with the concomitant reduction of oxygen to water. Subunit II transfers the electrons from a quinol to the binuclear center of the catalytic subunit I. The polypeptide is Probable quinol oxidase subunit 2 (qoxA) (Staphylococcus epidermidis (strain ATCC 12228 / FDA PCI 1200)).